A 336-amino-acid chain; its full sequence is uncharacterized protein (336 aa).

Basic and acidic residues predominate over residues 297–316 (KKDLQKSEEEEHPNDDHVYM). A disordered region spans residues 297-336 (KKDLQKSEEEEHPNDDHVYMTEEDDMEKIERGIESLGNGH).

This is an uncharacterized protein from Invertebrate iridescent virus 6 (IIV-6).